The sequence spans 66 residues: Large ribosomal subunit protein bL33c (66 aa).

The protein belongs to the bacterial ribosomal protein bL33 family.

Its subcellular location is the plastid. The protein resides in the chloroplast. In Lepidium virginicum (Virginia pepperweed), this protein is Large ribosomal subunit protein bL33c.